Reading from the N-terminus, the 197-residue chain is Large ribosomal subunit protein uL5 (197 aa).

Belongs to the universal ribosomal protein uL5 family. As to quaternary structure, part of the 50S ribosomal subunit; contacts the 5S rRNA and probably tRNA. Forms a bridge to the 30S subunit in the 70S ribosome.

In terms of biological role, this is one of the proteins that bind and probably mediate the attachment of the 5S RNA into the large ribosomal subunit, where it forms part of the central protuberance. In the 70S ribosome it contacts protein S13 of the 30S subunit (bridge B1b), connecting the 2 subunits; this bridge is implicated in subunit movement. May contact the P site tRNA; the 5S rRNA and some of its associated proteins might help stabilize positioning of ribosome-bound tRNAs. This chain is Large ribosomal subunit protein uL5, found in Caldivirga maquilingensis (strain ATCC 700844 / DSM 13496 / JCM 10307 / IC-167).